Reading from the N-terminus, the 871-residue chain is Leucine--tRNA ligase (871 aa).

The short motif at 43 to 53 (PYPSGRIHIGH) is the 'HIGH' region element. Positions 629 to 633 (KMSKS) match the 'KMSKS' region motif. Lys632 lines the ATP pocket.

Belongs to the class-I aminoacyl-tRNA synthetase family.

The protein resides in the cytoplasm. The catalysed reaction is tRNA(Leu) + L-leucine + ATP = L-leucyl-tRNA(Leu) + AMP + diphosphate. The polypeptide is Leucine--tRNA ligase (Chelativorans sp. (strain BNC1)).